Consider the following 522-residue polypeptide: Pectinesterase/pectinesterase inhibitor PPE8B (522 aa).

The N-terminal stretch at M1–S30 is a signal peptide. Residues S31–Q174 form a pectinesterase inhibitor PPE8B region. 6 N-linked (GlcNAc...) asparagine glycosylation sites follow: N105, N118, N119, N218, N221, and N274. The pectinesterase PPE8B stretch occupies residues D208–N506. Substrate-binding residues include T283 and Q313. D336 acts as the Proton donor; for pectinesterase activity in catalysis. C350 and C370 form a disulfide bridge. D357 functions as the Nucleophile; for pectinesterase activity in the catalytic mechanism. N-linked (GlcNAc...) asparagine glycosylation occurs at N405. 2 residues coordinate substrate: R426 and W428. N-linked (GlcNAc...) asparagine glycans are attached at residues N489 and N496.

The protein in the N-terminal section; belongs to the PMEI family. This sequence in the C-terminal section; belongs to the pectinesterase family.

It localises to the secreted. Its subcellular location is the cell wall. The enzyme catalyses [(1-&gt;4)-alpha-D-galacturonosyl methyl ester](n) + n H2O = [(1-&gt;4)-alpha-D-galacturonosyl](n) + n methanol + n H(+). The protein operates within glycan metabolism; pectin degradation; 2-dehydro-3-deoxy-D-gluconate from pectin: step 1/5. May have roles in the deposition of pectin in developing tissues and in the wall loosening and cell separation that occurs in cell expansion, fruit ripening and abscission. In Prunus persica (Peach), this protein is Pectinesterase/pectinesterase inhibitor PPE8B.